Here is an 82-residue protein sequence, read N- to C-terminus: Turripeptide IX-23 (82 aa).

Positions Met-1 to Gly-23 are cleaved as a signal peptide. Residues Arg-24–Pro-50 constitute a propeptide that is removed on maturation. Intrachain disulfides connect Cys-53/Cys-68, Cys-58/Cys-72, and Cys-64/Cys-79.

It belongs to the Pg turripeptide superfamily. In terms of tissue distribution, expressed by the venom duct.

The protein localises to the secreted. This Gemmula speciosa (Splendid gem-turris) protein is Turripeptide IX-23.